Consider the following 227-residue polypeptide: MPARSPEPLPDHSSVCSPGCADLPILAASGLGFSRAGRVVFSGIDLALGPGDLLQVLGANGSGKTSLLRVLSGLVAPDEGELHWRGRPVRAGDPSLLQALAYVGHANGIDPELSPVENLRFAARLAGVAATPDNVQAALAAFGLERVMHAPARSLSQGLRRRAALARLALARRELWLLDEPVTSLDADAAARFQAQLDDHLRAGGMAIVATHALLPGARTLRLDARS.

Positions 26-227 (LAASGLGFSR…ARTLRLDARS (202 aa)) constitute an ABC transporter domain. 58 to 65 (GANGSGKT) serves as a coordination point for ATP.

Belongs to the ABC transporter superfamily. CcmA exporter (TC 3.A.1.107) family. In terms of assembly, the complex is composed of two ATP-binding proteins (CcmA) and two transmembrane proteins (CcmB).

The protein resides in the cell inner membrane. It carries out the reaction heme b(in) + ATP + H2O = heme b(out) + ADP + phosphate + H(+). Functionally, part of the ABC transporter complex CcmAB involved in the biogenesis of c-type cytochromes; once thought to export heme, this seems not to be the case, but its exact role is uncertain. Responsible for energy coupling to the transport system. This is Cytochrome c biogenesis ATP-binding export protein CcmA from Cupriavidus necator (strain ATCC 17699 / DSM 428 / KCTC 22496 / NCIMB 10442 / H16 / Stanier 337) (Ralstonia eutropha).